An 81-amino-acid chain; its full sequence is WAP four-disulfide core domain protein 13 (81 aa).

The signal sequence occupies residues 1–22 (MRPVSPLQLLLVLSLAPQPVLG). Residues 31–74 (YILEPPPCRSEPGACNMFCTQQEECPEPLQCCSAYCGIVCTSNQ) form the WAP domain. Disulfide bonds link cysteine 38–cysteine 62, cysteine 45–cysteine 66, cysteine 49–cysteine 61, and cysteine 55–cysteine 70.

The protein resides in the secreted. Functionally, putative acid-stable proteinase inhibitor. This is WAP four-disulfide core domain protein 13 (Wfdc13) from Mus musculus (Mouse).